We begin with the raw amino-acid sequence, 214 residues long: Glycine-rich protein 2 (214 aa).

The CSD domain maps to 8-75; that stretch reads RAKGTVKWFS…RTKAVDVTGP (68 aa). Positions 54–91 are disordered; sequence TVEFEVESGGDGRTKAVDVTGPDGAAVQGGRGGGGGGG. The span at 80 to 91 shows a compositional bias: gly residues; that stretch reads VQGGRGGGGGGG. CCHC-type zinc fingers lie at residues 157–174 and 194–211; these read SGCF…DCSQ and GGCY…ECTS.

The protein is Glycine-rich protein 2 (GRP-2) of Nicotiana sylvestris (Wood tobacco).